The sequence spans 602 residues: Elongation factor 4 (602 aa).

The tr-type G domain maps to 7–189 (RNIRNFSIIA…AIVQRIPAPQ (183 aa)). Residues 19–24 (DHGKST) and 136–139 (NKID) contribute to the GTP site.

This sequence belongs to the TRAFAC class translation factor GTPase superfamily. Classic translation factor GTPase family. LepA subfamily.

The protein localises to the cell inner membrane. The enzyme catalyses GTP + H2O = GDP + phosphate + H(+). In terms of biological role, required for accurate and efficient protein synthesis under certain stress conditions. May act as a fidelity factor of the translation reaction, by catalyzing a one-codon backward translocation of tRNAs on improperly translocated ribosomes. Back-translocation proceeds from a post-translocation (POST) complex to a pre-translocation (PRE) complex, thus giving elongation factor G a second chance to translocate the tRNAs correctly. Binds to ribosomes in a GTP-dependent manner. This chain is Elongation factor 4, found in Xylella fastidiosa (strain M12).